Here is a 1231-residue protein sequence, read N- to C-terminus: Chromosome-associated kinesin KIF4 (1231 aa).

The Kinesin motor domain occupies 9–337; it reads PVRVALRCRP…LRYADRARKI (329 aa). Residue 88–95 coordinates ATP; it reads GQTGSGKT. Positions 351–1000 form a coiled coil; sequence ELNHLKQQVQ…IKQKLTLLQV (650 aa). S395 bears the Phosphoserine mark. A Phosphothreonine modification is found at T800. Residues S802, S811, and S816 each carry the phosphoserine modification. The tract at residues 1001–1231 is globular; that stretch reads ASKQKPHLTR…GCSPIQEESH (231 aa). The disordered stretch occupies residues 1189–1212; the sequence is HPELKSIASESQENKAIGKKKKRA. S1224 and S1230 each carry phosphoserine.

The protein belongs to the TRAFAC class myosin-kinesin ATPase superfamily. Kinesin family. Chromokinesin subfamily. [2Fe-2S] cluster is required as a cofactor. It depends on [4Fe-4S] cluster as a cofactor. As to expression, expressed in pyramidal cells in juvenile hippocampus, granular cells in juvenile cerebellar cortex and in adult spleen.

The protein localises to the nucleus. It localises to the chromosome. Its subcellular location is the cytoplasm. It is found in the cytoskeleton. Its function is as follows. Iron-sulfur (Fe-S) cluster binding motor protein that has a role in chromosome segregation during mitosis. Required for mitotic chromosomal positioning and bipolar spindle stabilization. This chain is Chromosome-associated kinesin KIF4 (Kif4), found in Mus musculus (Mouse).